Here is a 255-residue protein sequence, read N- to C-terminus: 5-oxoprolinase subunit A (255 aa).

This sequence belongs to the LamB/PxpA family. As to quaternary structure, forms a complex composed of PxpA, PxpB and PxpC.

It catalyses the reaction 5-oxo-L-proline + ATP + 2 H2O = L-glutamate + ADP + phosphate + H(+). Functionally, catalyzes the cleavage of 5-oxoproline to form L-glutamate coupled to the hydrolysis of ATP to ADP and inorganic phosphate. This Rhodopseudomonas palustris (strain BisB18) protein is 5-oxoprolinase subunit A.